Consider the following 634-residue polypeptide: Biosynthetic arginine decarboxylase (634 aa).

Position 103 is an N6-(pyridoxal phosphate)lysine (Lys103). Residue 283–293 coordinates substrate; the sequence is FDVGGGLGVDY.

This sequence belongs to the Orn/Lys/Arg decarboxylase class-II family. SpeA subfamily. Mg(2+) is required as a cofactor. The cofactor is pyridoxal 5'-phosphate.

It catalyses the reaction L-arginine + H(+) = agmatine + CO2. It functions in the pathway amine and polyamine biosynthesis; agmatine biosynthesis; agmatine from L-arginine: step 1/1. Functionally, catalyzes the biosynthesis of agmatine from arginine. The chain is Biosynthetic arginine decarboxylase from Photorhabdus laumondii subsp. laumondii (strain DSM 15139 / CIP 105565 / TT01) (Photorhabdus luminescens subsp. laumondii).